A 1069-amino-acid chain; its full sequence is Rab GTPase-activating protein 1 (1069 aa).

The tract at residues 1–79 (MDDKASVGKI…DPPMDDQPGE (79 aa)) is disordered. The segment covering 7–22 (VGKISVSSDSVSTLNS) has biased composition (low complexity). Serine 42 carries the phosphoserine modification. The PID domain maps to 142 to 298 (EDSVVFSKLT…IFTFSVSLEI (157 aa)). Serine 360 bears the Phosphoserine mark. Positions 482–527 (ERERRKTTASPSVRLPQSGSQSSVIPSPPEDDEEEDNDEPLLSGSG) are disordered. A compositionally biased stretch (polar residues) spans 489–506 (TASPSVRLPQSGSQSSVI). The span at 510–520 (PEDDEEEDNDE) shows a compositional bias: acidic residues. The 187-residue stretch at 566 to 752 (GVPEALRGEV…HIIDLLLCEG (187 aa)) folds into the Rab-GAP TBC domain. Positions 798–1047 (KKLMELACNM…ALNEVQAAKK (250 aa)) form a coiled coil. The residue at position 996 (threonine 996) is a Phosphothreonine.

As to quaternary structure, interacts with RAB6A and tubulin gamma.

The protein localises to the cytoplasm. It localises to the cytosol. The protein resides in the cytoskeleton. It is found in the microtubule organizing center. Its subcellular location is the centrosome. Functionally, may act as a GTPase-activating protein of RAB6A. May play a role in microtubule nucleation by centrosome. May participate in a RAB6A-mediated pathway involved in the metaphase-anaphase transition. This is Rab GTPase-activating protein 1 (RABGAP1) from Homo sapiens (Human).